Here is a 186-residue protein sequence, read N- to C-terminus: Peptidyl-tRNA hydrolase (186 aa).

Residue tyrosine 14 coordinates tRNA. The active-site Proton acceptor is histidine 19. Tyrosine 64, asparagine 66, and asparagine 112 together coordinate tRNA.

Belongs to the PTH family. Monomer.

It localises to the cytoplasm. It carries out the reaction an N-acyl-L-alpha-aminoacyl-tRNA + H2O = an N-acyl-L-amino acid + a tRNA + H(+). Hydrolyzes ribosome-free peptidyl-tRNAs (with 1 or more amino acids incorporated), which drop off the ribosome during protein synthesis, or as a result of ribosome stalling. Its function is as follows. Catalyzes the release of premature peptidyl moieties from peptidyl-tRNA molecules trapped in stalled 50S ribosomal subunits, and thus maintains levels of free tRNAs and 50S ribosomes. This chain is Peptidyl-tRNA hydrolase, found in Bacillus cereus (strain ATCC 14579 / DSM 31 / CCUG 7414 / JCM 2152 / NBRC 15305 / NCIMB 9373 / NCTC 2599 / NRRL B-3711).